A 453-amino-acid chain; its full sequence is UDP-N-acetylmuramate--L-alanine ligase (453 aa).

Residue 112-118 (GTHGKTT) coordinates ATP.

The protein belongs to the MurCDEF family.

The protein localises to the cytoplasm. The enzyme catalyses UDP-N-acetyl-alpha-D-muramate + L-alanine + ATP = UDP-N-acetyl-alpha-D-muramoyl-L-alanine + ADP + phosphate + H(+). It functions in the pathway cell wall biogenesis; peptidoglycan biosynthesis. In terms of biological role, cell wall formation. This chain is UDP-N-acetylmuramate--L-alanine ligase, found in Lawsonia intracellularis (strain PHE/MN1-00).